A 117-amino-acid chain; its full sequence is Resistin-like gamma (117 aa).

A signal peptide spans 1–29 (MLTFNKMKTTTCSLLICISLLQLMVPVNT). Cystine bridges form between cysteine 61-cysteine 114, cysteine 73-cysteine 113, cysteine 82-cysteine 99, cysteine 84-cysteine 101, and cysteine 88-cysteine 103.

Belongs to the resistin/FIZZ family. As to quaternary structure, homodimer. Heterodimer with RETNLB. As to expression, expressed in colon, lung, spleen, pancreas, ileum and bone marrow (at protein level). In colon, found throughout the crypt and surface epithelium, including goblet cells (at protein level). Highest expression is observed in bone marrow, spleen and lung, with lower levels in other tissues. Detected at low levels in granulocytes, but not found in monocytes or lymphocytes. Has very weak expression in white adipose tissue.

The protein resides in the secreted. Probable hormone. Promotes chemotaxis in myeloid cells. The protein is Resistin-like gamma of Mus musculus (Mouse).